Here is a 245-residue protein sequence, read N- to C-terminus: TPR repeat-containing protein PA4299 (245 aa).

The N-terminal stretch at methionine 1–glycine 16 is a signal peptide. Cysteine 17 carries the N-palmitoyl cysteine lipid modification. The S-diacylglycerol cysteine moiety is linked to residue cysteine 17. 3 TPR repeats span residues proline 100–glutamate 133, arginine 135–glycine 167, and leucine 169–aspartate 200. The tract at residues serine 210–proline 245 is disordered.

It is found in the cell membrane. This chain is TPR repeat-containing protein PA4299, found in Pseudomonas aeruginosa (strain ATCC 15692 / DSM 22644 / CIP 104116 / JCM 14847 / LMG 12228 / 1C / PRS 101 / PAO1).